The primary structure comprises 434 residues: Probable exopolygalacturonase A (434 aa).

The N-terminal stretch at 1–19 (MKLPILVTLFITLPALCVS) is a signal peptide. N-linked (GlcNAc...) asparagine glycosylation is found at N46, N57, N106, N199, and N207. The PbH1 1 repeat unit spans residues 232-253 (SSNIVIQDSRIVNTDDCVSFKP). The active-site Proton donor is D246. C248 and C265 are oxidised to a cystine. N254 is a glycosylation site (N-linked (GlcNAc...) asparagine). The PbH1 2 repeat unit spans residues 255 to 275 (STQIVIQNLDCTGSHGISVGS). The active site involves H269. N-linked (GlcNAc...) asparagine glycans are attached at residues N293, N329, and N354. An intrachain disulfide couples C392 to C398. Residue N400 is glycosylated (N-linked (GlcNAc...) asparagine).

Belongs to the glycosyl hydrolase 28 family.

Its subcellular location is the secreted. The enzyme catalyses [(1-&gt;4)-alpha-D-galacturonosyl](n) + H2O = alpha-D-galacturonate + [(1-&gt;4)-alpha-D-galacturonosyl](n-1). Specific in hydrolyzing the terminal glycosidic bond of polygalacturonic acid and oligogalacturonates. The protein is Probable exopolygalacturonase A (pgxA) of Aspergillus niger (strain ATCC MYA-4892 / CBS 513.88 / FGSC A1513).